Here is a 160-residue protein sequence, read N- to C-terminus: Small ribosomal subunit protein uS9 (160 aa).

Residues Met1–Pro18 show a composition bias toward polar residues. A disordered region spans residues Met1 to Tyr37.

It belongs to the universal ribosomal protein uS9 family.

This chain is Small ribosomal subunit protein uS9, found in Hyphomonas neptunium (strain ATCC 15444).